The sequence spans 622 residues: 1-deoxy-D-xylulose-5-phosphate synthase (622 aa).

Residues His80 and 121 to 123 each bind thiamine diphosphate; that span reads GHS. Asp152 is a binding site for Mg(2+). Thiamine diphosphate is bound by residues 153-154, Asn181, Tyr288, and Glu370; that span reads GA. Asn181 is a Mg(2+) binding site.

It belongs to the transketolase family. DXPS subfamily. As to quaternary structure, homodimer. The cofactor is Mg(2+). Thiamine diphosphate is required as a cofactor.

It catalyses the reaction D-glyceraldehyde 3-phosphate + pyruvate + H(+) = 1-deoxy-D-xylulose 5-phosphate + CO2. It participates in metabolic intermediate biosynthesis; 1-deoxy-D-xylulose 5-phosphate biosynthesis; 1-deoxy-D-xylulose 5-phosphate from D-glyceraldehyde 3-phosphate and pyruvate: step 1/1. Catalyzes the acyloin condensation reaction between C atoms 2 and 3 of pyruvate and glyceraldehyde 3-phosphate to yield 1-deoxy-D-xylulose-5-phosphate (DXP). This chain is 1-deoxy-D-xylulose-5-phosphate synthase, found in Shewanella denitrificans (strain OS217 / ATCC BAA-1090 / DSM 15013).